The primary structure comprises 305 residues: Olfactory receptor 4X1 (305 aa).

Residues 1 to 23 (MVATNNVTEIIFVGFSQNWSEQR) are Extracellular-facing. N-linked (GlcNAc...) asparagine glycosylation is found at Asn6 and Asn18. The helical transmembrane segment at 24–47 (VISVMFLLMYTAVVLGNGLIVVTI) threads the bilayer. Over 48 to 55 (LASKVLTS) the chain is Cytoplasmic. The chain crosses the membrane as a helical span at residues 56-77 (PMYFFLSYLSFVEICYCSVMAP). Residues 78 to 98 (KLIFDSFIKRKVISLKGCLTQ) are Extracellular-facing. The cysteines at positions 95 and 187 are disulfide-linked. Residues 99–118 (MFSLHFFGGTEAFLLMVMAY) form a helical membrane-spanning segment. Residues 119 to 137 (DRYVAICKPLHYMAIMNQR) are Cytoplasmic-facing. A helical transmembrane segment spans residues 138 to 156 (MCGLLVRIAWGGGLLHSVG). Topologically, residues 157-193 (QTFLIFQLPFCGPNIMDHYFCDVHPVLELACADTFFI) are extracellular. The chain crosses the membrane as a helical span at residues 194 to 217 (SLLIITNGGSISVVSFFVLMASYL). At 218-233 (IILHFLRSHNLEGQHK) the chain is on the cytoplasmic side. A helical transmembrane segment spans residues 234-256 (ALSTCASHVTVVDLFFIPCSLVY). The Extracellular segment spans residues 257–267 (IRPCVTLPADK). The chain crosses the membrane as a helical span at residues 268 to 287 (IVAVFYTVVTPLLNPVIYSF). Over 288 to 305 (RNAEVKNAMRRFIGGKVI) the chain is Cytoplasmic.

This sequence belongs to the G-protein coupled receptor 1 family.

Its subcellular location is the cell membrane. Its function is as follows. Odorant receptor. The sequence is that of Olfactory receptor 4X1 (OR4X1) from Homo sapiens (Human).